The following is a 72-amino-acid chain: Brevinin-2SN3 (72 aa).

Residues 1–22 (MFTLKKPLLLLVFLGMISLSLC) form the signal peptide. Residues 23-40 (QDERGADEDDGGEMTEEE) constitute a propeptide, removed in mature form. The cysteines at positions 66 and 72 are disulfide-linked.

It belongs to the frog skin active peptide (FSAP) family. Brevinin subfamily. As to expression, expressed by the skin glands.

It localises to the secreted. Functionally, antimicrobial peptide. Active against a variety of Gram-negative and Gram-positive bacterial strains. Active against fungus C.glabrata 090902 but not against C.albicans ATCC 10231. Shows hemolytic activity against human erythrocytes. In Sylvirana spinulosa (Fine-spined frog), this protein is Brevinin-2SN3.